Reading from the N-terminus, the 809-residue chain is Leucine--tRNA ligase (809 aa).

Residues 40-50 carry the 'HIGH' region motif; it reads PYPSGRIHMGH. Positions 579-583 match the 'KMSKS' region motif; it reads KMSKS. Lysine 582 is an ATP binding site.

This sequence belongs to the class-I aminoacyl-tRNA synthetase family.

Its subcellular location is the cytoplasm. The enzyme catalyses tRNA(Leu) + L-leucine + ATP = L-leucyl-tRNA(Leu) + AMP + diphosphate. The protein is Leucine--tRNA ligase of Campylobacter lari (strain RM2100 / D67 / ATCC BAA-1060).